The chain runs to 196 residues: MSRYRGPRLKKIRRLGALPGLTRKTPKSGSNLKKKFHSGKKEQYRIRLQEKQKLRFHYGLTERQLLRYVHIAGKAKKSTGQVLLQLLEMRLDNIVFRLGMASTIPGARQLVNHRHILVNGRIVDIPSFRCKPRDIITTKDNQRSKRLVQNSIASSDPGKLPKHLTVDTLQYKGLVQKILDRKWVGLKINELLVVEY.

Residues 17–36 (ALPGLTRKTPKSGSNLKKKF) form a disordered region. The region spanning 89–150 (MRLDNIVFRL…NQRSKRLVQN (62 aa)) is the S4 RNA-binding domain.

It belongs to the universal ribosomal protein uS4 family. Part of the 30S ribosomal subunit. Contacts protein S5. The interaction surface between S4 and S5 is involved in control of translational fidelity.

Its subcellular location is the plastid. The protein resides in the chloroplast. One of the primary rRNA binding proteins, it binds directly to 16S rRNA where it nucleates assembly of the body of the 30S subunit. Functionally, with S5 and S12 plays an important role in translational accuracy. This Tragus racemosus (Carrot grass) protein is Small ribosomal subunit protein uS4c (rps4).